Consider the following 43-residue polypeptide: Phi-Lf prophage-derived putative minor coat protein (43 aa).

The chain is Phi-Lf prophage-derived putative minor coat protein (gVII-1) from Xanthomonas campestris pv. campestris (strain ATCC 33913 / DSM 3586 / NCPPB 528 / LMG 568 / P 25).